Consider the following 267-residue polypeptide: Diphthine--ammonia ligase (267 aa).

Residue tyrosine 97 is modified to Phosphotyrosine.

Belongs to the Diphthine--ammonia ligase family.

The enzyme catalyses diphthine-[translation elongation factor 2] + NH4(+) + ATP = diphthamide-[translation elongation factor 2] + AMP + diphosphate + H(+). It participates in protein modification; peptidyl-diphthamide biosynthesis. Amidase that catalyzes the last step of diphthamide biosynthesis using ammonium and ATP. Diphthamide biosynthesis consists in the conversion of an L-histidine residue in the translation elongation factor 2 (EEF2) to diphthamide. This Mus musculus (Mouse) protein is Diphthine--ammonia ligase (Dph6).